The primary structure comprises 193 residues: Potassium-transporting ATPase KdpC subunit (193 aa).

A helical transmembrane segment spans residues 9–29 (VLMTVVTTVLLGLVYPLLITG).

The protein belongs to the KdpC family. In terms of assembly, the system is composed of three essential subunits: KdpA, KdpB and KdpC.

The protein localises to the cell inner membrane. In terms of biological role, part of the high-affinity ATP-driven potassium transport (or Kdp) system, which catalyzes the hydrolysis of ATP coupled with the electrogenic transport of potassium into the cytoplasm. This subunit acts as a catalytic chaperone that increases the ATP-binding affinity of the ATP-hydrolyzing subunit KdpB by the formation of a transient KdpB/KdpC/ATP ternary complex. The sequence is that of Potassium-transporting ATPase KdpC subunit from Koribacter versatilis (strain Ellin345).